The chain runs to 224 residues: uncharacterized protein (224 aa).

To M.tuberculosis Rv2558.

This is an uncharacterized protein from Mycobacterium tuberculosis (strain CDC 1551 / Oshkosh).